A 348-amino-acid polypeptide reads, in one-letter code: Histidinol-phosphate aminotransferase (348 aa).

The residue at position 210 (Lys-210) is an N6-(pyridoxal phosphate)lysine.

Belongs to the class-II pyridoxal-phosphate-dependent aminotransferase family. Histidinol-phosphate aminotransferase subfamily. As to quaternary structure, homodimer. The cofactor is pyridoxal 5'-phosphate.

It catalyses the reaction L-histidinol phosphate + 2-oxoglutarate = 3-(imidazol-4-yl)-2-oxopropyl phosphate + L-glutamate. The protein operates within amino-acid biosynthesis; L-histidine biosynthesis; L-histidine from 5-phospho-alpha-D-ribose 1-diphosphate: step 7/9. The protein is Histidinol-phosphate aminotransferase of Pseudomonas putida (strain ATCC 47054 / DSM 6125 / CFBP 8728 / NCIMB 11950 / KT2440).